A 1105-amino-acid chain; its full sequence is Serine/threonine-protein kinase Warts (1105 aa).

Residues valine 33 to arginine 54 show a composition bias toward polar residues. Disordered regions lie at residues valine 33–valine 81, cysteine 145–glycine 253, glycine 273–arginine 362, glutamine 383–serine 462, and alanine 514–phenylalanine 643. The span at methionine 69–valine 81 shows a compositional bias: pro residues. Residues glutamine 242 to glycine 253 show a composition bias toward polar residues. The span at serine 307–serine 320 shows a compositional bias: low complexity. Polar residues predominate over residues serine 325–threonine 343. 2 stretches are compositionally biased toward low complexity: residues alanine 387–proline 400 and alanine 415–glutamine 437. A compositionally biased stretch (basic and acidic residues) spans glutamine 515–glutamine 533. Low complexity-rich tracts occupy residues glutamine 551 to asparagine 576 and asparagine 589 to serine 616. A compositionally biased stretch (basic and acidic residues) spans proline 627–phenylalanine 643. The 302-residue stretch at phenylalanine 719–phenylalanine 1020 folds into the Protein kinase domain. ATP is bound by residues isoleucine 725–valine 733 and lysine 749. The Proton acceptor role is filled by aspartate 843. 2 disordered regions span residues glycine 881–proline 900 and glutamate 1038–aspartate 1070. In terms of domain architecture, AGC-kinase C-terminal spans lysine 1021–lysine 1091.

The protein belongs to the protein kinase superfamily. AGC Ser/Thr protein kinase family. In terms of assembly, interacts with yki. Interacts with jub. Mg(2+) is required as a cofactor.

Its subcellular location is the cytoplasm. The protein resides in the cytosol. It is found in the cytoskeleton. The protein localises to the microtubule organizing center. It localises to the centrosome. It carries out the reaction L-seryl-[protein] + ATP = O-phospho-L-seryl-[protein] + ADP + H(+). It catalyses the reaction L-threonyl-[protein] + ATP = O-phospho-L-threonyl-[protein] + ADP + H(+). In terms of biological role, negative regulator of Yorkie (Yki) in the Hippo/SWH (Sav/Wts/Hpo) signaling pathway that plays a pivotal role in organ size control and tumor suppression by restricting proliferation and promoting apoptosis. The core of this pathway is composed of a kinase cascade wherein Hippo (Hpo), in complex with its regulatory protein Salvador (Sav), phosphorylates and activates Warts (Wts) in complex with its regulatory protein Mats, which in turn phosphorylates and inactivates the Yorkie (Yki) oncoprotein. The Hippo/SWH signaling pathway inhibits the activity of the transcriptional complex formed by Scalloped (sd) and Yki and the target genes of this pathway include cyclin-E (cycE), diap1 and bantam. Inhibits nuclear localization of Yki. Regulates salivary gland degradation in a PI3K-dependent manner and Yki- and Sd-independent, mechanism. The protein is Serine/threonine-protein kinase Warts (wts) of Drosophila melanogaster (Fruit fly).